The primary structure comprises 420 residues: Gamma-glutamyl phosphate reductase (420 aa).

It belongs to the gamma-glutamyl phosphate reductase family.

It localises to the cytoplasm. It catalyses the reaction L-glutamate 5-semialdehyde + phosphate + NADP(+) = L-glutamyl 5-phosphate + NADPH + H(+). It participates in amino-acid biosynthesis; L-proline biosynthesis; L-glutamate 5-semialdehyde from L-glutamate: step 2/2. Catalyzes the NADPH-dependent reduction of L-glutamate 5-phosphate into L-glutamate 5-semialdehyde and phosphate. The product spontaneously undergoes cyclization to form 1-pyrroline-5-carboxylate. This is Gamma-glutamyl phosphate reductase from Streptococcus pneumoniae serotype 4 (strain ATCC BAA-334 / TIGR4).